The primary structure comprises 102 residues: uncharacterized protein (102 aa).

This is an uncharacterized protein from Haemophilus influenzae (strain ATCC 51907 / DSM 11121 / KW20 / Rd).